Reading from the N-terminus, the 27-residue chain is Trichocyst matrix protein T4-C (27 aa).

It belongs to the TMP family.

Its subcellular location is the trichocyst. Its function is as follows. Structural protein that crystallize inside the trichocyst matrix. This chain is Trichocyst matrix protein T4-C (T4C), found in Paramecium tetraurelia.